Reading from the N-terminus, the 299-residue chain is Glycine--tRNA ligase alpha subunit (299 aa).

This sequence belongs to the class-II aminoacyl-tRNA synthetase family. Tetramer of two alpha and two beta subunits.

The protein localises to the cytoplasm. It carries out the reaction tRNA(Gly) + glycine + ATP = glycyl-tRNA(Gly) + AMP + diphosphate. This is Glycine--tRNA ligase alpha subunit from Dichelobacter nodosus (strain VCS1703A).